Consider the following 99-residue polypeptide: DNA-binding protein Fis (99 aa).

A DNA-binding region (H-T-H motif) is located at residues 75–94; it reads QTRAANMLGINRGTLRKKLK.

The protein belongs to the transcriptional regulatory Fis family. Homodimer.

Functionally, activates ribosomal RNA transcription. Plays a direct role in upstream activation of rRNA promoters. This Haemophilus influenzae (strain PittEE) protein is DNA-binding protein Fis.